An 82-amino-acid chain; its full sequence is uncharacterized protein (82 aa).

A disordered region spans residues 60-82 (YKRRRPDHMMKRNSPSYTGDHKT).

This is an uncharacterized protein from Saccharomyces cerevisiae (strain ATCC 204508 / S288c) (Baker's yeast).